The chain runs to 586 residues: Probable riboflavin import ATP-binding protein RfuB (586 aa).

ABC transporter domains follow at residues 46 to 299 and 343 to 586; these read RAVD…NECI and LRVE…DSHT. Residue 89 to 96 participates in ATP binding; sequence GKNGAGKS.

This sequence belongs to the ABC transporter superfamily. In terms of assembly, the complex is probably composed of two ATP-binding proteins (RfuB), two transmembrane proteins (RfuC and RfuD) and a solute-binding protein (RfuA).

The protein localises to the cell inner membrane. Probably part of the ABC transporter complex RfuABCD involved in riboflavin import. Probably responsible for energy coupling to the transport system. The protein is Probable riboflavin import ATP-binding protein RfuB of Treponema pallidum (strain Nichols).